The chain runs to 1050 residues: Integrin alpha-5 (1050 aa).

A signal peptide spans 1–32; that stretch reads MQLPRGSRVPGLVATFLFPVLCALLTFSSVRG. Topologically, residues 33 to 996 are extracellular; that stretch reads FNLAVEQPAV…IHWAKPESSY (964 aa). FG-GAP repeat units follow at residues 34–99, 116–175, 183–235, 249–301, 302–367, 368–426, and 430–493; these read NLAV…GTNC, DTPQ…NFTT, RTDF…QEAY, QTRQ…GTDL, RSLY…MEST, PHLI…GVDS, and QVLQ…ISPN. N-linked (GlcNAc...) asparagine glycans are attached at residues Asn-75, Asn-95, and Asn-98. Cystine bridges form between Cys-90/Cys-99 and Cys-145/Cys-166. Asn-172 is a glycosylation site (N-linked (GlcNAc...) asparagine). Cys-182 and Cys-195 are oxidised to a cystine. Residues Glu-270, Ser-272, Asp-274, Thr-276, and Asp-278 each contribute to the Ca(2+) site. N-linked (GlcNAc...) asparagine glycosylation is found at Asn-287, Asn-297, and Asn-306. Residues Asp-324, Asn-326, Asp-328, Leu-330, Asp-332, Asp-390, Asp-392, Asp-394, Asp-398, Asp-454, Asp-456, Asn-458, Tyr-460, and Asp-462 each coordinate Ca(2+). Cys-502 and Cys-513 are disulfide-bonded. Asn-507, Asn-515, Asn-521, and Asn-600 each carry an N-linked (GlcNAc...) asparagine glycan. Cys-519 and Cys-575 are joined by a disulfide. Cys-636 and Cys-642 are disulfide-bonded. N-linked (GlcNAc...) asparagine glycans are attached at residues Asn-649, Asn-714, Asn-763, and Asn-861. The cysteines at positions 708 and 721 are disulfide-linked. Cystine bridges form between Cys-839–Cys-958, Cys-862–Cys-922, and Cys-910–Cys-917. The chain crosses the membrane as a helical span at residues 997–1022; that stretch reads GVPLWIIILAILIGLLLLALLIYVLY. Over 1023–1050 the chain is Cytoplasmic; sequence KLGFFKRSYQYGTAMEKAELKPQAASEA. A GFFKR motif motif is present at residues 1025 to 1029; that stretch reads GFFKR.

The protein belongs to the integrin alpha chain family. In terms of assembly, heterodimer of an alpha and a beta subunit. The alpha subunit is composed of a heavy and a light chain linked by a disulfide bond. Alpha-5 associates with beta-1.

The protein localises to the cell membrane. Its subcellular location is the cell junction. It localises to the focal adhesion. In terms of biological role, integrin alpha-5/beta-1 (ITGA5:ITGB1) is a receptor for fibronectin. It recognizes the sequence R-G-D in its ligands. ITGA5:ITGB1 acts as a receptor for fibrillin-1 (FBN1) and mediates R-G-D-dependent cell adhesion to FBN1. ITGA5:ITGB1 acts as a receptor for fibronectin (FN1) and mediates R-G-D-dependent cell adhesion to FN1. ITGA5:ITGB1 is a receptor for IL1B and binding is essential for IL1B signaling. ITGA5:ITGB3 is a receptor for soluble CD40LG and is required for CD40/CD40LG signaling. This Xenopus laevis (African clawed frog) protein is Integrin alpha-5 (itga5).